The primary structure comprises 68 residues: Large ribosomal subunit protein bL35 (68 aa).

This sequence belongs to the bacterial ribosomal protein bL35 family.

This Fusobacterium nucleatum subsp. nucleatum (strain ATCC 25586 / DSM 15643 / BCRC 10681 / CIP 101130 / JCM 8532 / KCTC 2640 / LMG 13131 / VPI 4355) protein is Large ribosomal subunit protein bL35.